The primary structure comprises 250 residues: Isoprenyl transferase (250 aa).

Aspartate 26 is an active-site residue. Residue aspartate 26 coordinates Mg(2+). Substrate is bound by residues glycine 27–arginine 30, tryptophan 31, arginine 39, histidine 43, and serine 71–glutamate 73. Asparagine 74 acts as the Proton acceptor in catalysis. Substrate contacts are provided by residues tryptophan 75, arginine 77, arginine 198, and arginine 204–serine 206. Position 217 (glutamate 217) interacts with Mg(2+).

It belongs to the UPP synthase family. As to quaternary structure, homodimer. The cofactor is Mg(2+).

Its function is as follows. Catalyzes the condensation of isopentenyl diphosphate (IPP) with allylic pyrophosphates generating different type of terpenoids. The chain is Isoprenyl transferase from Streptococcus agalactiae serotype III (strain NEM316).